The chain runs to 284 residues: 4-diphosphocytidyl-2-C-methyl-D-erythritol kinase (284 aa).

Residue lysine 10 is part of the active site. Proline 92–serine 102 provides a ligand contact to ATP. Aspartate 134 is a catalytic residue.

This sequence belongs to the GHMP kinase family. IspE subfamily.

The catalysed reaction is 4-CDP-2-C-methyl-D-erythritol + ATP = 4-CDP-2-C-methyl-D-erythritol 2-phosphate + ADP + H(+). Its pathway is isoprenoid biosynthesis; isopentenyl diphosphate biosynthesis via DXP pathway; isopentenyl diphosphate from 1-deoxy-D-xylulose 5-phosphate: step 3/6. Catalyzes the phosphorylation of the position 2 hydroxy group of 4-diphosphocytidyl-2C-methyl-D-erythritol. This chain is 4-diphosphocytidyl-2-C-methyl-D-erythritol kinase, found in Salinibacter ruber (strain DSM 13855 / M31).